The chain runs to 344 residues: Histone-lysine N-methyltransferase, H3 lysine-9 specific KMT1 (344 aa).

Residues Ser-79–Gly-174 form the Pre-SET domain. Cys-81, Cys-83, Cys-89, Cys-94, Cys-96, Cys-156, Cys-160, Cys-162, Cys-166, and Cys-272 together coordinate Zn(2+). Positions Ile-177 to Val-312 constitute an SET domain. Tyr-311 is an S-adenosyl-L-methionine binding site. The 17-residue stretch at His-328–Trp-344 folds into the Post-SET domain. The Zn(2+) site is built by Cys-332, Cys-334, and Cys-339.

This sequence belongs to the class V-like SAM-binding methyltransferase superfamily.

It is found in the chromosome. The catalysed reaction is L-lysyl(9)-[histone H3] + 3 S-adenosyl-L-methionine = N(6),N(6),N(6)-trimethyl-L-lysyl(9)-[histone H3] + 3 S-adenosyl-L-homocysteine + 3 H(+). Histone methyltransferase that specifically trimethylates histone H3 to form H3K9me3. H3K9me3 marks chromatin regions for DNA methylation. Plays a key role in the regulation of the biosynthesis of the gamma-pyrones fusapyrone (FPY) and deoxyfusapyrone (dFPY). The sequence is that of Histone-lysine N-methyltransferase, H3 lysine-9 specific KMT1 from Fusarium mangiferae (Mango malformation disease fungus).